Reading from the N-terminus, the 450-residue chain is Tubulin alpha chain (450 aa).

Q11 lines the GTP pocket. The residue at position 40 (K40) is an N6-acetyllysine. The GTP site is built by E71, S140, G144, T145, T179, N206, and N228. E71 is a Mg(2+) binding site. The active site involves E254.

This sequence belongs to the tubulin family. In terms of assembly, dimer of alpha and beta chains. A typical microtubule is a hollow water-filled tube with an outer diameter of 25 nm and an inner diameter of 15 nM. Alpha-beta heterodimers associate head-to-tail to form protofilaments running lengthwise along the microtubule wall with the beta-tubulin subunit facing the microtubule plus end conferring a structural polarity. Microtubules usually have 13 protofilaments but different protofilament numbers can be found in some organisms and specialized cells. It depends on Mg(2+) as a cofactor. Post-translationally, acetylation of alpha chains at Lys-40 stabilizes microtubules and affects affinity and processivity of microtubule motors. This modification has a role in multiple cellular functions, ranging from cell motility, cell cycle progression or cell differentiation to intracellular trafficking and signaling.

It localises to the cytoplasm. Its subcellular location is the cytoskeleton. It catalyses the reaction GTP + H2O = GDP + phosphate + H(+). Tubulin is the major constituent of microtubules, a cylinder consisting of laterally associated linear protofilaments composed of alpha- and beta-tubulin heterodimers. Microtubules grow by the addition of GTP-tubulin dimers to the microtubule end, where a stabilizing cap forms. Below the cap, tubulin dimers are in GDP-bound state, owing to GTPase activity of alpha-tubulin. In Tyrophagus putrescentiae (Mold mite), this protein is Tubulin alpha chain.